A 120-amino-acid polypeptide reads, in one-letter code: Large ribosomal subunit protein bL19 (120 aa).

This sequence belongs to the bacterial ribosomal protein bL19 family.

In terms of biological role, this protein is located at the 30S-50S ribosomal subunit interface and may play a role in the structure and function of the aminoacyl-tRNA binding site. The sequence is that of Large ribosomal subunit protein bL19 from Chlorobium limicola (strain DSM 245 / NBRC 103803 / 6330).